Here is a 94-residue protein sequence, read N- to C-terminus: Host-modulation protein 11K (94 aa).

In terms of assembly, interacts with host GRB2; this interaction alters host cell environment by modulating host signaling pathways.

The protein localises to the host cytoplasm. Enhances viral DNA replication and virion release. Mechansitically, optimizes viral DNA replication by interacting with host GRB2 to inhibit the negative effect of ERK signaling on B19 viral replication. Plays a role in viral infectivity. Induces apoptosis of primary erythroid progenitor cells. In Human parvovirus B19 (strain HV) (HPV B19), this protein is Host-modulation protein 11K (11K).